We begin with the raw amino-acid sequence, 303 residues long: Ribosomal protein L11 methyltransferase (303 aa).

Positions 152, 173, 195, and 239 each coordinate S-adenosyl-L-methionine.

The protein belongs to the methyltransferase superfamily. PrmA family.

Its subcellular location is the cytoplasm. The catalysed reaction is L-lysyl-[protein] + 3 S-adenosyl-L-methionine = N(6),N(6),N(6)-trimethyl-L-lysyl-[protein] + 3 S-adenosyl-L-homocysteine + 3 H(+). In terms of biological role, methylates ribosomal protein L11. This chain is Ribosomal protein L11 methyltransferase, found in Desulforapulum autotrophicum (strain ATCC 43914 / DSM 3382 / VKM B-1955 / HRM2) (Desulfobacterium autotrophicum).